Consider the following 299-residue polypeptide: GTP cyclohydrolase FolE2 (299 aa).

Residues 1-25 (MKTKQWPSKTERHKRFGSVPPVAGK) form a disordered region.

It belongs to the GTP cyclohydrolase IV family.

It carries out the reaction GTP + H2O = 7,8-dihydroneopterin 3'-triphosphate + formate + H(+). It functions in the pathway cofactor biosynthesis; 7,8-dihydroneopterin triphosphate biosynthesis; 7,8-dihydroneopterin triphosphate from GTP: step 1/1. Converts GTP to 7,8-dihydroneopterin triphosphate. The polypeptide is GTP cyclohydrolase FolE2 (Halalkalibacterium halodurans (strain ATCC BAA-125 / DSM 18197 / FERM 7344 / JCM 9153 / C-125) (Bacillus halodurans)).